We begin with the raw amino-acid sequence, 559 residues long: Malate synthase, glyoxysomal (559 aa).

Arg173 functions as the Proton acceptor in the catalytic mechanism. Residue Asp459 is the Proton donor of the active site. The short motif at 557–559 is the Microbody targeting signal element; that stretch reads CKL.

This sequence belongs to the malate synthase family.

It localises to the glyoxysome. The enzyme catalyses glyoxylate + acetyl-CoA + H2O = (S)-malate + CoA + H(+). It functions in the pathway carbohydrate metabolism; glyoxylate cycle; (S)-malate from isocitrate: step 2/2. This Zea mays (Maize) protein is Malate synthase, glyoxysomal (LIP).